Consider the following 334-residue polypeptide: DNA-directed RNA polymerase subunit alpha (334 aa).

Positions 1–232 (MVREEIAVST…IDLFIPFLHA (232 aa)) are alpha N-terminal domain (alpha-NTD). The interval 268–334 (GIALKCIFID…ILQKHFTIDC (67 aa)) is alpha C-terminal domain (alpha-CTD).

Belongs to the RNA polymerase alpha chain family. In plastids the minimal PEP RNA polymerase catalytic core is composed of four subunits: alpha, beta, beta', and beta''. When a (nuclear-encoded) sigma factor is associated with the core the holoenzyme is formed, which can initiate transcription.

Its subcellular location is the plastid. The protein resides in the chloroplast. The catalysed reaction is RNA(n) + a ribonucleoside 5'-triphosphate = RNA(n+1) + diphosphate. Functionally, DNA-dependent RNA polymerase catalyzes the transcription of DNA into RNA using the four ribonucleoside triphosphates as substrates. In Chloranthus spicatus (Chulantree), this protein is DNA-directed RNA polymerase subunit alpha.